Reading from the N-terminus, the 20-residue chain is Hemocyanin subunit 6 (20 aa).

It belongs to the tyrosinase family. Hemocyanin subfamily. In terms of tissue distribution, hemolymph.

The protein resides in the secreted. It localises to the extracellular space. Hemocyanins are copper-containing oxygen carriers occurring freely dissolved in the hemolymph of many mollusks and arthropods. The sequence is that of Hemocyanin subunit 6 from Homarus americanus (American lobster).